A 165-amino-acid chain; its full sequence is Endoribonuclease YbeY (165 aa).

Residues histidine 130, histidine 134, and histidine 140 each contribute to the Zn(2+) site.

The protein belongs to the endoribonuclease YbeY family. Requires Zn(2+) as cofactor.

It is found in the cytoplasm. Functionally, single strand-specific metallo-endoribonuclease involved in late-stage 70S ribosome quality control and in maturation of the 3' terminus of the 16S rRNA. This Streptococcus agalactiae serotype Ia (strain ATCC 27591 / A909 / CDC SS700) protein is Endoribonuclease YbeY.